An 814-amino-acid polypeptide reads, in one-letter code: Pre-rRNA-processing protein TSR1 homolog (814 aa).

Residues 1 to 67 (MADHAFHRPG…NQMNQLRKNK (67 aa)) form a disordered region. Residues 16 to 27 (NKAHKTGRHRSK) are compositionally biased toward basic residues. The Bms1-type G domain occupies 84–249 (APFLVCLLPM…MRRIGGQKKR (166 aa)). Disordered regions lie at residues 316–357 (PYKL…DAEQ) and 392–448 (WIPD…EEFQ). Residues 317–340 (YKLDKSRDGENSEVRLLDRSDPSK) show a composition bias toward basic and acidic residues. The segment covering 395–426 (DVEEVEDPDGKDDDDMSEDDDDDKEDDNEDFM) has biased composition (acidic residues). The segment covering 431–442 (KSFEDEYEKRDS) has biased composition (basic and acidic residues). Threonine 444 carries the phosphothreonine modification.

Belongs to the TRAFAC class translation factor GTPase superfamily. Bms1-like GTPase family. TSR1 subfamily.

The protein resides in the nucleus. Its subcellular location is the nucleolus. Its function is as follows. Required during maturation of the 40S ribosomal subunit in the nucleolus. In Drosophila melanogaster (Fruit fly), this protein is Pre-rRNA-processing protein TSR1 homolog.